The following is a 247-amino-acid chain: 1-(5-phosphoribosyl)-5-[(5-phosphoribosylamino)methylideneamino] imidazole-4-carboxamide isomerase (247 aa).

Aspartate 8 functions as the Proton acceptor in the catalytic mechanism. Aspartate 129 acts as the Proton donor in catalysis.

This sequence belongs to the HisA/HisF family.

It is found in the cytoplasm. The enzyme catalyses 1-(5-phospho-beta-D-ribosyl)-5-[(5-phospho-beta-D-ribosylamino)methylideneamino]imidazole-4-carboxamide = 5-[(5-phospho-1-deoxy-D-ribulos-1-ylimino)methylamino]-1-(5-phospho-beta-D-ribosyl)imidazole-4-carboxamide. It functions in the pathway amino-acid biosynthesis; L-histidine biosynthesis; L-histidine from 5-phospho-alpha-D-ribose 1-diphosphate: step 4/9. This chain is 1-(5-phosphoribosyl)-5-[(5-phosphoribosylamino)methylideneamino] imidazole-4-carboxamide isomerase, found in Solidesulfovibrio magneticus (strain ATCC 700980 / DSM 13731 / RS-1) (Desulfovibrio magneticus).